A 141-amino-acid polypeptide reads, in one-letter code: Actin-depolymerizing factor 9 (141 aa).

Serine 8 is modified (phosphoserine). The 134-residue stretch at 8–141 folds into the ADF-H domain; sequence SGMWMTDDCK…GFDKIQDRAK (134 aa).

Belongs to the actin-binding proteins ADF family.

It localises to the cytoplasm. It is found in the cytoskeleton. Its function is as follows. Does not display typical F-actin depolymerizing activity. Exhibits a high ability to stabilize and cross-link actin filaments. Functions as an actin bundling protein with the highest efficiency under acidic conditions. May play a role in the modulation of levels of histone H3 lysine 4 trimethylation and H3 lysine 9 and 14 acetylation at the FLC locus. The chain is Actin-depolymerizing factor 9 (ADF9) from Arabidopsis thaliana (Mouse-ear cress).